A 221-amino-acid chain; its full sequence is Probable GTP-binding protein EngB (221 aa).

One can recognise an EngB-type G domain in the interval 23–211 (PLREVAFAGR…DNLIIKWLFE (189 aa)). Mg(2+)-binding residues include Ser38 and Thr60.

Belongs to the TRAFAC class TrmE-Era-EngA-EngB-Septin-like GTPase superfamily. EngB GTPase family. The cofactor is Mg(2+).

In terms of biological role, necessary for normal cell division and for the maintenance of normal septation. The sequence is that of Probable GTP-binding protein EngB from Polynucleobacter asymbioticus (strain DSM 18221 / CIP 109841 / QLW-P1DMWA-1) (Polynucleobacter necessarius subsp. asymbioticus).